The primary structure comprises 491 residues: Myocilin (491 aa).

The first 18 residues, 1-18 (MPAVQLLLLACPVWDVGA), serve as a signal peptide directing secretion. A glycan (N-linked (GlcNAc...) asparagine) is linked at N43. Positions 98 to 171 (QETPEGLQRE…QEVARLRRGQ (74 aa)) form a coiled coil. The interval 151–189 (ENLARRLESSSQEVARLRRGQCPQTRDTARDVPPGSREV) is disordered. The 260-residue stretch at 231–490 (GCGELVWVGE…MVTYDIKLSK (260 aa)) folds into the Olfactomedin-like domain. Residues C232 and C420 are joined by a disulfide bond. The Ca(2+) site is built by D367, N415, A416, I464, and D465.

As to quaternary structure, homodimer (via N-terminus). Can also form higher oligomers. Interacts with OLFM3, FN1, NRCAM, GLDN and NFASC. Interacts (via N-terminus) with MYL2. Interacts with SFRP1, FRZB, FZD7, FZD10, FZD1 and WIF1; regulates Wnt signaling. Interacts with SNTA1; regulates muscle hypertrophy. Interacts with ERBB2 and ERBB3; activates ERBB2-ERBB3 signaling pathway. Interacts with SNCG; affects its secretion and its aggregation. Post-translationally, palmitoylated. In terms of processing, undergoes a calcium-dependent proteolytic cleavage at Arg-213 by CAPN2 in the endoplasmic reticulum. The result is the production of two fragments, one of 35 kDa containing the C-terminal olfactomedin-like domain, and another of 20 kDa containing the N-terminal leucine zipper-like domain. Glycosylated.

It is found in the secreted. The protein localises to the golgi apparatus. The protein resides in the cytoplasmic vesicle. It localises to the extracellular space. Its subcellular location is the extracellular matrix. It is found in the extracellular exosome. The protein localises to the mitochondrion. The protein resides in the mitochondrion intermembrane space. It localises to the mitochondrion inner membrane. Its subcellular location is the mitochondrion outer membrane. It is found in the rough endoplasmic reticulum. The protein localises to the cell projection. The protein resides in the cilium. It localises to the endoplasmic reticulum. Functionally, secreted glycoprotein regulating the activation of different signaling pathways in adjacent cells to control different processes including cell adhesion, cell-matrix adhesion, cytoskeleton organization and cell migration. Promotes substrate adhesion, spreading and formation of focal contacts. Negatively regulates cell-matrix adhesion and stress fiber assembly through Rho protein signal transduction. Modulates the organization of actin cytoskeleton by stimulating the formation of stress fibers through interactions with components of Wnt signaling pathways. Promotes cell migration through activation of PTK2 and the downstream phosphatidylinositol 3-kinase signaling. Plays a role in bone formation and promotes osteoblast differentiation in a dose-dependent manner through mitogen-activated protein kinase signaling. Mediates myelination in the peripheral nervous system through ERBB2/ERBB3 signaling. Plays a role as a regulator of muscle hypertrophy through the components of dystrophin-associated protein complex. Involved in positive regulation of mitochondrial depolarization. Plays a role in neurite outgrowth. May participate in the obstruction of fluid outflow in the trabecular meshwork. This Macaca fascicularis (Crab-eating macaque) protein is Myocilin (MYOC).